Consider the following 29-residue polypeptide: Omega-conotoxins GVIIA/GVIIB (29 aa).

Disulfide bonds link C1/C16, C8/C19, and C15/C26. P4 and P7 each carry 4-hydroxyproline.

In terms of tissue distribution, expressed by the venom duct.

It localises to the secreted. In terms of biological role, omega-conotoxins act at presynaptic membranes, they bind and block voltage-gated calcium channels (Cav). The sequence is that of Omega-conotoxins GVIIA/GVIIB from Conus geographus (Geography cone).